Consider the following 809-residue polypeptide: Protein TRC8 homolog (809 aa).

The next 11 helical transmembrane spans lie at 124 to 144 (TVKF…FMLW), 147 to 167 (HLVM…SYWS), 200 to 220 (VMSL…FAYI), 233 to 253 (MPII…AKVV), 256 to 276 (LPVV…MQSA), 350 to 370 (LVDG…ISMF), 392 to 412 (LGTV…LTSL), 425 to 445 (LCLL…PILM), 461 to 481 (ALSV…HLWS), 488 to 508 (WLLA…VSLA), and 539 to 559 (SVEF…LIFE). An RING-type; atypical zinc finger spans residues 621–659 (CAICYQEMYSAKITRCRHFFHGVCLRKWLYVQDRCPLCH). Disordered stretches follow at residues 696–724 (NNAA…SSSA) and 752–788 (VASS…TSAA). Residues 711–724 (EASEQAPATSSSSA) are compositionally biased toward low complexity.

As to quaternary structure, interacts with VHL. Interacts with the MPN domain of CSN5. Interacts with EIF3F and EIF3H.

Its subcellular location is the endoplasmic reticulum membrane. Plays a role in growth inhibition that is dependent upon COP9 signalosome subunits CSN5 and CSN6. May modulate signalosome levels or compartmentalization. Probably functions in the same or a related pathway to VHL during early midline development. In Drosophila melanogaster (Fruit fly), this protein is Protein TRC8 homolog.